We begin with the raw amino-acid sequence, 177 residues long: Large ribosomal subunit protein uL6 (177 aa).

It belongs to the universal ribosomal protein uL6 family. Part of the 50S ribosomal subunit.

In terms of biological role, this protein binds to the 23S rRNA, and is important in its secondary structure. It is located near the subunit interface in the base of the L7/L12 stalk, and near the tRNA binding site of the peptidyltransferase center. The chain is Large ribosomal subunit protein uL6 from Bordetella pertussis (strain Tohama I / ATCC BAA-589 / NCTC 13251).